Reading from the N-terminus, the 511-residue chain is Histidine ammonia-lyase (511 aa).

Positions 142-144 (ASG) form a cross-link, 5-imidazolinone (Ala-Gly). A 2,3-didehydroalanine (Ser) modification is found at Ser-143.

This sequence belongs to the PAL/histidase family. Post-translationally, contains an active site 4-methylidene-imidazol-5-one (MIO), which is formed autocatalytically by cyclization and dehydration of residues Ala-Ser-Gly.

The protein localises to the cytoplasm. The enzyme catalyses L-histidine = trans-urocanate + NH4(+). The protein operates within amino-acid degradation; L-histidine degradation into L-glutamate; N-formimidoyl-L-glutamate from L-histidine: step 1/3. The protein is Histidine ammonia-lyase of Phenylobacterium zucineum (strain HLK1).